Here is a 334-residue protein sequence, read N- to C-terminus: Glycerol-3-phosphate dehydrogenase [NAD(P)+] (334 aa).

NADPH-binding residues include Ser-13, Phe-14, and Lys-108. 3 residues coordinate sn-glycerol 3-phosphate: Lys-108, Gly-137, and Thr-139. Ala-141 lines the NADPH pocket. Sn-glycerol 3-phosphate-binding residues include Lys-193, Asp-246, Ser-256, Arg-257, and Asn-258. The active-site Proton acceptor is the Lys-193. Arg-257 is an NADPH binding site. Positions 281 and 283 each coordinate NADPH.

It belongs to the NAD-dependent glycerol-3-phosphate dehydrogenase family.

It is found in the cytoplasm. It catalyses the reaction sn-glycerol 3-phosphate + NAD(+) = dihydroxyacetone phosphate + NADH + H(+). The enzyme catalyses sn-glycerol 3-phosphate + NADP(+) = dihydroxyacetone phosphate + NADPH + H(+). It participates in membrane lipid metabolism; glycerophospholipid metabolism. In terms of biological role, catalyzes the reduction of the glycolytic intermediate dihydroxyacetone phosphate (DHAP) to sn-glycerol 3-phosphate (G3P), the key precursor for phospholipid synthesis. This is Glycerol-3-phosphate dehydrogenase [NAD(P)+] from Bartonella tribocorum (strain CIP 105476 / IBS 506).